Consider the following 313-residue polypeptide: Tyrosine recombinase slr0733 (313 aa).

In terms of domain architecture, Core-binding (CB) spans 7–101 (NNLSGLNQNI…AIKSLVNYAR (95 aa)). The Tyr recombinase domain occupies 122 to 307 (RDTTGVSPTS…RHQHQAQITD (186 aa)). Catalysis depends on residues Arg-162, Lys-188, His-258, Arg-261, and His-285. Tyr-294 serves as the catalytic O-(3'-phospho-DNA)-tyrosine intermediate.

It belongs to the 'phage' integrase family.

It is found in the cytoplasm. Its function is as follows. Site-specific tyrosine recombinase, which acts by catalyzing the cutting and rejoining of the recombining DNA molecules. The polypeptide is Tyrosine recombinase slr0733 (Synechocystis sp. (strain ATCC 27184 / PCC 6803 / Kazusa)).